Here is a 526-residue protein sequence, read N- to C-terminus: MLO-like protein 1 (526 aa).

The Extracellular portion of the chain corresponds to 1–11 (MGHGGEGMSLE). Residues 12–32 (FTPTWVVAGVCTVIVAISLAV) form a helical membrane-spanning segment. Over 33 to 61 (ERLLHYFGTVLKKKKQKPLYEALQKVKEE) the chain is Cytoplasmic. Residues 62 to 82 (LMLLGFISLLLTVFQGLISKF) form a helical membrane-spanning segment. The Extracellular segment spans residues 83 to 160 (CVKENVLMHM…LSLEALHHLH (78 aa)). The helical transmembrane segment at 161-181 (IFIFVLAISHVTFCVLTVIFG) threads the bilayer. The Cytoplasmic portion of the chain corresponds to 182–287 (STRIHQWKKW…MRALEDDFKQ (106 aa)). Helical transmembrane passes span 288 to 308 (VVGI…LNVN) and 309 to 329 (GWHT…AVGT). Over 330 to 372 (KLEHVIAQLAHEVAEKHVAIEGDLVVKPSDEHFWFSKPQIVLY) the chain is Cytoplasmic. The helical transmembrane segment at 373 to 393 (LIHFILFQNAFEIAFFFWIWV) threads the bilayer. Topologically, residues 394–412 (TYGFDSCIMGQVRYIVPRL) are extracellular. A helical transmembrane segment spans residues 413–433 (VIGVFIQVLCSYSTLPLYAIV). The Cytoplasmic segment spans residues 434–526 (SQMGSSFKKA…NNEITPDHNN (93 aa)). Residues 447–468 (ENVQVGLVGWAQKVKQKRDLKA) form a calmodulin-binding region. The interval 471-526 (SNGDEGSSQAGPGPDSGSGSAPAAGPGAGFAGIQLSRVTRNNAGDTNNEITPDHNN) is disordered. Positions 476 to 495 (GSSQAGPGPDSGSGSAPAAG) are enriched in low complexity. A compositionally biased stretch (polar residues) spans 506-520 (SRVTRNNAGDTNNEI).

The protein belongs to the MLO family.

The protein resides in the cell membrane. Functionally, may be involved in modulation of pathogen defense and leaf cell death. Activity seems to be regulated by Ca(2+)-dependent calmodulin binding and seems not to require heterotrimeric G proteins. This chain is MLO-like protein 1 (MLO1), found in Arabidopsis thaliana (Mouse-ear cress).